The chain runs to 189 residues: dCTP deaminase (189 aa).

Residues 112–117 (KSTYAR), 136–138 (TLE), Q157, Y171, and Q181 each bind dCTP. E138 (proton donor/acceptor) is an active-site residue.

It belongs to the dCTP deaminase family. In terms of assembly, homotrimer.

The enzyme catalyses dCTP + H2O + H(+) = dUTP + NH4(+). Its pathway is pyrimidine metabolism; dUMP biosynthesis; dUMP from dCTP (dUTP route): step 1/2. Catalyzes the deamination of dCTP to dUTP. The protein is dCTP deaminase of Leptothrix cholodnii (strain ATCC 51168 / LMG 8142 / SP-6) (Leptothrix discophora (strain SP-6)).